Reading from the N-terminus, the 272-residue chain is Shikimate dehydrogenase (NADP(+)) (272 aa).

Residues 14 to 16 and Thr-61 each bind shikimate; that span reads SKS. Lys-65 acts as the Proton acceptor in catalysis. Residue Glu-77 participates in NADP(+) binding. Positions 86 and 102 each coordinate shikimate. Residues 126–130, 149–154, and Met-213 contribute to the NADP(+) site; these read GAGGA and NRTQEK. Tyr-215 contacts shikimate. NADP(+) is bound at residue Gly-237.

This sequence belongs to the shikimate dehydrogenase family. As to quaternary structure, homodimer.

It carries out the reaction shikimate + NADP(+) = 3-dehydroshikimate + NADPH + H(+). The protein operates within metabolic intermediate biosynthesis; chorismate biosynthesis; chorismate from D-erythrose 4-phosphate and phosphoenolpyruvate: step 4/7. In terms of biological role, involved in the biosynthesis of the chorismate, which leads to the biosynthesis of aromatic amino acids. Catalyzes the reversible NADPH linked reduction of 3-dehydroshikimate (DHSA) to yield shikimate (SA). The sequence is that of Shikimate dehydrogenase (NADP(+)) from Erwinia tasmaniensis (strain DSM 17950 / CFBP 7177 / CIP 109463 / NCPPB 4357 / Et1/99).